The following is a 213-amino-acid chain: uncharacterized protein (213 aa).

This is an uncharacterized protein from Aquifex aeolicus (strain VF5).